The chain runs to 115 residues: Large ribosomal subunit protein bL19 (115 aa).

Belongs to the bacterial ribosomal protein bL19 family.

Its function is as follows. This protein is located at the 30S-50S ribosomal subunit interface and may play a role in the structure and function of the aminoacyl-tRNA binding site. This is Large ribosomal subunit protein bL19 from Latilactobacillus sakei subsp. sakei (strain 23K) (Lactobacillus sakei subsp. sakei).